We begin with the raw amino-acid sequence, 316 residues long: Ribosomal RNA small subunit methyltransferase H (316 aa).

S-adenosyl-L-methionine contacts are provided by residues 35-37 (SGH), aspartate 55, phenylalanine 84, aspartate 105, and glutamine 112.

Belongs to the methyltransferase superfamily. RsmH family.

The protein localises to the cytoplasm. It carries out the reaction cytidine(1402) in 16S rRNA + S-adenosyl-L-methionine = N(4)-methylcytidine(1402) in 16S rRNA + S-adenosyl-L-homocysteine + H(+). Specifically methylates the N4 position of cytidine in position 1402 (C1402) of 16S rRNA. The polypeptide is Ribosomal RNA small subunit methyltransferase H (Streptococcus equi subsp. zooepidemicus (strain MGCS10565)).